A 583-amino-acid polypeptide reads, in one-letter code: uncharacterized protein (583 aa).

Residues 162 to 424 (YGIFAAPILD…RGVQQNPFAK (263 aa)) enclose the FAD-binding FR-type domain.

The protein belongs to the flavoprotein pyridine nucleotide cytochrome reductase family. FAD serves as cofactor.

The protein resides in the mitochondrion. This is an uncharacterized protein from Schizosaccharomyces pombe (strain 972 / ATCC 24843) (Fission yeast).